The chain runs to 510 residues: ATP synthase subunit alpha (510 aa).

Residue 169–176 (GDRQTGKT) participates in ATP binding.

It belongs to the ATPase alpha/beta chains family. In terms of assembly, F-type ATPases have 2 components, CF(1) - the catalytic core - and CF(0) - the membrane proton channel. CF(1) has five subunits: alpha(3), beta(3), gamma(1), delta(1), epsilon(1). CF(0) has four main subunits: a(1), b(1), b'(1) and c(9-12).

The protein localises to the cell inner membrane. It catalyses the reaction ATP + H2O + 4 H(+)(in) = ADP + phosphate + 5 H(+)(out). In terms of biological role, produces ATP from ADP in the presence of a proton gradient across the membrane. The alpha chain is a regulatory subunit. The chain is ATP synthase subunit alpha from Rhodopseudomonas palustris (strain HaA2).